Consider the following 155-residue polypeptide: Putative pre-16S rRNA nuclease (155 aa).

It belongs to the YqgF nuclease family.

The protein resides in the cytoplasm. Its function is as follows. Could be a nuclease involved in processing of the 5'-end of pre-16S rRNA. In Corynebacterium jeikeium (strain K411), this protein is Putative pre-16S rRNA nuclease.